A 296-amino-acid polypeptide reads, in one-letter code: MTAQVLDGKATAGQIKEELAQRVARLRERDVVPGLGTVLVGDDPGSRSYVAGKHRDCEQVGLASIRRELPADASQEELERVIDELNEDPRCTGYIVQLPLPEYMDTNSVLERIDPAKDADGLHPTNLGRLVLNVSEPMTSPLPCTPHGIVELLTRHGVELAGREVLVIGRGVTVGRPMGLLLTRREINATVTLAHTGTRNLPELLGRADVVVAAAGRPHMVTAEQVKPGAVLLDVGVSRVPDPETGKGRLTGDIDPAAAEVASWMSPNPGGVGPMTRAMLLVNVVESCERQVFGQP.

NADP(+) is bound by residues 169–171, T196, and V237; that span reads GRG.

It belongs to the tetrahydrofolate dehydrogenase/cyclohydrolase family. Homodimer.

The catalysed reaction is (6R)-5,10-methylene-5,6,7,8-tetrahydrofolate + NADP(+) = (6R)-5,10-methenyltetrahydrofolate + NADPH. It catalyses the reaction (6R)-5,10-methenyltetrahydrofolate + H2O = (6R)-10-formyltetrahydrofolate + H(+). Its pathway is one-carbon metabolism; tetrahydrofolate interconversion. Functionally, catalyzes the oxidation of 5,10-methylenetetrahydrofolate to 5,10-methenyltetrahydrofolate and then the hydrolysis of 5,10-methenyltetrahydrofolate to 10-formyltetrahydrofolate. The sequence is that of Bifunctional protein FolD from Kocuria rhizophila (strain ATCC 9341 / DSM 348 / NBRC 103217 / DC2201).